A 193-amino-acid polypeptide reads, in one-letter code: Cysteine and glycine-rich protein 2 (193 aa).

Residues 10 to 61 (CGACGRTVYHAEEVQCDGRSFHRCCFLCMVCRKNLDSTTVAIHDEEIYCKSC) form the LIM zinc-binding 1 domain. A Nuclear localization signal motif is present at residues 64 to 69 (KKYGPK). Lys91 participates in a covalent cross-link: Glycyl lysine isopeptide (Lys-Gly) (interchain with G-Cter in SUMO2). An N6-acetyllysine mark is found at Lys112 and Lys131. The region spanning 119 to 170 (CSRCGDSVYAAEKIIGAGKPWHKNCFRCAKCGKSLESTTLTEKEGEIYCKGC) is the LIM zinc-binding 2 domain. Lys137 bears the N6-acetyllysine; alternate mark. Lys137 is subject to N6-succinyllysine; alternate. Residue Lys161 is modified to N6-acetyllysine.

Interacts with KAT14. The LIM domain 1 is necessary and sufficient for this interaction. Interacts with GLRX3.

It localises to the nucleus. Drastically down-regulated in response to PDGF-BB or cell injury, that promote smooth muscle cell proliferation and dedifferentiation. Seems to play a role in the development of the embryonic vascular system. This is Cysteine and glycine-rich protein 2 (Csrp2) from Mus musculus (Mouse).